The primary structure comprises 139 residues: GSK3B-interacting protein (139 aa).

The interval 1–22 is disordered; it reads METDCNPMELSSMSGFEEGSEL. The required for PRKAR2A interaction; contributes to a protective effect against H(2)O(2)-induced apoptosis stretch occupies residues 41–45; it reads VNDVL. The segment at 115-139 is interaction with GSK3B and acts as a GSK3B inhibitor; that stretch reads SPAYREAFGNALLQRLEALKRDGQS.

Belongs to the GSKIP family. In terms of assembly, forms a complex composed of PRKAR2A or PRKAR2B, GSK3B and GSKIP through GSKIP interaction; facilitates PKA-induced phosphorylation of GSK3B leading to GSK3B inactivation; recruits DNM1L through GSK3B for PKA-mediated phosphorylation of DNM1L; promotes beta-catenin degradation through GSK3B-induced phosphorylation of beta-catenin; stabilizes beta-catenin and enhances Wnt-induced signaling through PKA-induced phosphorylation of beta-catenin. Interacts with GSK3B; induces GSK3B-mediated phosphorylation of GSKIP and inhibits GSK3B kinase activity. Phosphorylated by GSK3B. Detected in heart, brain, placenta, liver, skeletal muscle, kidney, testis, lung and pancreas.

Its subcellular location is the cytoplasm. It is found in the nucleus. A-kinase anchoring protein for GSK3B and PKA that regulates or facilitates their kinase activity towards their targets. The ternary complex enhances Wnt-induced signaling by facilitating the GSK3B- and PKA-induced phosphorylation of beta-catenin leading to beta-catenin degradation and stabilization respectively. Upon cAMP activation, the ternary complex contributes to neuroprotection against oxidative stress-induced apoptosis by facilitating the PKA-induced phosphorylation of DML1 and PKA-induced inactivation of GSK3B. During neurite outgrowth promotes neuron proliferation; while increases beta-catenin-induced transcriptional activity through GSK3B kinase activity inhibition, reduces N-cadherin level to promote cell cycle progression. The protein is GSK3B-interacting protein of Homo sapiens (Human).